The following is a 729-amino-acid chain: Fatty acid oxidation complex subunit alpha (729 aa).

The segment at 1-189 is enoyl-CoA hydratase/isomerase; sequence MLYKGDTLYL…KIGLVDGVVK (189 aa). Substrate is bound at residue Asp296. A 3-hydroxyacyl-CoA dehydrogenase region spans residues 311-729; sequence ETPKQAAVLG…ARPVGSLKTA (419 aa). NAD(+)-binding positions include Met324, Asp343, 400-402, Lys407, and Ser429; that span reads VVE. His450 serves as the catalytic For 3-hydroxyacyl-CoA dehydrogenase activity. Residue Asn453 participates in NAD(+) binding. The substrate site is built by Asn500 and Tyr660. The tract at residues 708 to 729 is disordered; the sequence is RHNEPYYPPVEPARPVGSLKTA.

It in the N-terminal section; belongs to the enoyl-CoA hydratase/isomerase family. The protein in the C-terminal section; belongs to the 3-hydroxyacyl-CoA dehydrogenase family. Heterotetramer of two alpha chains (FadB) and two beta chains (FadA).

It catalyses the reaction a (3S)-3-hydroxyacyl-CoA + NAD(+) = a 3-oxoacyl-CoA + NADH + H(+). It carries out the reaction a (3S)-3-hydroxyacyl-CoA = a (2E)-enoyl-CoA + H2O. The enzyme catalyses a 4-saturated-(3S)-3-hydroxyacyl-CoA = a (3E)-enoyl-CoA + H2O. The catalysed reaction is (3S)-3-hydroxybutanoyl-CoA = (3R)-3-hydroxybutanoyl-CoA. It catalyses the reaction a (3Z)-enoyl-CoA = a 4-saturated (2E)-enoyl-CoA. It carries out the reaction a (3E)-enoyl-CoA = a 4-saturated (2E)-enoyl-CoA. It functions in the pathway lipid metabolism; fatty acid beta-oxidation. Its function is as follows. Involved in the aerobic and anaerobic degradation of long-chain fatty acids via beta-oxidation cycle. Catalyzes the formation of 3-oxoacyl-CoA from enoyl-CoA via L-3-hydroxyacyl-CoA. It can also use D-3-hydroxyacyl-CoA and cis-3-enoyl-CoA as substrate. The protein is Fatty acid oxidation complex subunit alpha of Salmonella gallinarum (strain 287/91 / NCTC 13346).